A 142-amino-acid polypeptide reads, in one-letter code: Putative pre-16S rRNA nuclease (142 aa).

It belongs to the YqgF nuclease family.

Its subcellular location is the cytoplasm. In terms of biological role, could be a nuclease involved in processing of the 5'-end of pre-16S rRNA. This is Putative pre-16S rRNA nuclease from Prosthecochloris aestuarii (strain DSM 271 / SK 413).